We begin with the raw amino-acid sequence, 243 residues long: Small ribosomal subunit protein mS23 (243 aa).

It belongs to the mitochondrion-specific ribosomal protein mS23 family. As to quaternary structure, component of the mitochondrial small ribosomal subunit.

Its subcellular location is the mitochondrion. The sequence is that of Small ribosomal subunit protein mS23 (rsm25) from Emericella nidulans (strain FGSC A4 / ATCC 38163 / CBS 112.46 / NRRL 194 / M139) (Aspergillus nidulans).